Here is a 318-residue protein sequence, read N- to C-terminus: DNA repair nuclease/redox regulator APEX1 (318 aa).

The segment at 1-33 is necessary for interaction with YBX1, binding to RNA, association together with NPM1 to rRNA, endoribonuclease activity on abasic RNA and localization in the nucleoli; sequence MPKRGKKGAVAEDGDELRTEPEAKKSKTAAKKN. The interval 1 to 60 is disordered; it reads MPKRGKKGAVAEDGDELRTEPEAKKSKTAAKKNDKEAAGEGPALYEDPPDQKTSPSGKPA. Lys-6 and Lys-7 each carry N6-acetyllysine; by EP300. A Nuclear localization signal (NLS) motif is present at residues 8–13; it reads GAVAED. Over residues 16 to 38 the composition is skewed to basic and acidic residues; it reads ELRTEPEAKKSKTAAKKNDKEAA. Positions 23 to 33 are necessary for interaction with NPM1 and for efficient rRNA binding; sequence AKKSKTAAKKN. Residues Lys-27, Lys-31, Lys-32, and Lys-35 each carry the N6-acetyllysine modification. Ser-54 is subject to Phosphoserine. The short motif at 64 to 80 is the Nuclear export signal (NES) element; sequence ICSWNVDGLRAWIKKKG. At Cys-65 the chain carries S-nitrosocysteine; alternate. Cys-65 and Cys-93 are disulfide-bonded. Residue Asp-70 participates in Mg(2+) binding. Cys-93 carries the post-translational modification S-nitrosocysteine; alternate. Residue Glu-96 coordinates Mg(2+). Residue Tyr-171 is part of the active site. Lys-197 carries the N6-acetyllysine modification. Mg(2+) contacts are provided by Asp-210 and Asn-212. Asp-210 (proton donor/acceptor) is an active-site residue. Thr-233 bears the Phosphothreonine; by CDK5 mark. The segment at 289-318 is mitochondrial targeting sequence (MTS); that stretch reads HSLLPALCDSKIRSKALGSDHCPITLYLAL. Asp-308 contributes to the Mg(2+) binding site. Cys-310 carries the post-translational modification S-nitrosocysteine.

Belongs to the DNA repair enzymes AP/ExoA family. Monomer. Homodimer; disulfide-linked. Component of the SET complex, composed of at least APEX1, SET, ANP32A, HMGB2, NME1 and TREX1. Associates with the dimer XRCC5/XRCC6 in a DNA-dependent manner. Interacts with SIRT1; the interaction is increased in the context of genotoxic stress. Interacts with HDAC1, HDAC2 and HDAC3; the interactions are not dependent on the APEX1 acetylation status. Interacts with XRCC1; the interaction is induced by SIRT1 and increased with the APEX1 acetylated form. Interacts with NPM1 (via N-terminal domain); the interaction is RNA-dependent and decreases in hydrogen peroxide-damaged cells. Interacts (via N-terminus) with YBX1 (via C-terminus); the interaction is increased in presence of APEX1 acetylated at Lys-6 and Lys-7. Interacts with HNRNPL; the interaction is DNA-dependent. Interacts (via N-terminus) with KPNA1 and KPNA2. Interacts with TXN; the interaction stimulates the FOS/JUN AP-1 complex DNA-binding activity in a redox-dependent manner. Interacts with GZMA, KRT8, MDM2, POLB, PRDX6, PRPF19, RPLP0, TOMM20 and WDR77. Binds to CDK5. Requires Mg(2+) as cofactor. Mn(2+) is required as a cofactor. In terms of processing, phosphorylated. Phosphorylation by kinase PKC or casein kinase CK2 results in enhanced redox activity that stimulates binding of the FOS/JUN AP-1 complex to its cognate binding site. AP-endodeoxyribonuclease activity is not affected by CK2-mediated phosphorylation. Phosphorylation of Thr-233 by CDK5 in response to MPP(+)/MPTP (1-methyl-4-phenylpyridinium) reduces AP-endodeoxyribonuclease activity resulting in accumulation of DNA damage and contributing to neuronal death. Acetylated on Lys-6 and Lys-7. Acetylation is increased by the transcriptional coactivator EP300 acetyltransferase, genotoxic agents like H(2)O(2) and methyl methanesulfonate (MMS). Acetylation increases its binding affinity to the negative calcium response element (nCaRE) DNA promoter. The acetylated form induces a stronger binding of YBX1 to the Y-box sequence in the MDR1 promoter than the unacetylated form. Deacetylated on lysines. Lys-6 and Lys-7 are deacetylated by SIRT1. Post-translationally, cleaved at Lys-31 by granzyme A to create the mitochondrial form; leading in reduction of binding to DNA, AP endodeoxyribonuclease activity, redox activation of transcription factors and to enhanced cell death. Cleaved by granzyme K; leading to intracellular ROS accumulation and enhanced cell death after oxidative stress. In terms of processing, cys-69 and Cys-93 are nitrosylated in response to nitric oxide (NO) and lead to the exposure of the nuclear export signal (NES). Ubiquitinated by MDM2; leading to translocation to the cytoplasm and proteasomal degradation.

It is found in the nucleus. Its subcellular location is the nucleolus. The protein localises to the nucleus speckle. The protein resides in the endoplasmic reticulum. It localises to the cytoplasm. It is found in the mitochondrion. The enzyme catalyses a deoxyribonucleotide-2'-deoxyribose-5'-monophosphate-DNA + H2O = a 5'-end 2'-deoxyribose-5'-monophosphate-DNA + a 3'-end 2'-deoxyribonucleotide-DNA + H(+). The catalysed reaction is Exonucleolytic cleavage in the 3'- to 5'-direction to yield nucleoside 5'-phosphates.. It carries out the reaction a 3'-end 2'-deoxyribonucleotide-3'-phosphoglycolate-DNA + H2O = 2-phosphoglycolate + a 3'-end 2'-deoxyribonucleotide-DNA + H(+). It catalyses the reaction a 3'-end 2'-deoxyribonucleotide-8-oxoguanine-DNA + H2O = 8-oxo-dGMP + a 3'-end 2'-deoxyribonucleotide-DNA + H(+). With respect to regulation, NPM1 stimulates endodeoxyribonuclease activity on double-stranded DNA with AP sites, but inhibits endoribonuclease activity on single-stranded RNA containing AP sites. Functionally, multifunctional protein that plays a central role in the cellular response to oxidative stress. The two major activities of APEX1 are DNA repair and redox regulation of transcriptional factors. Functions as an apurinic/apyrimidinic (AP) endodeoxyribonuclease in the base excision repair (BER) pathway of DNA lesions induced by oxidative and alkylating agents. Initiates repair of AP sites in DNA by catalyzing hydrolytic incision of the phosphodiester backbone immediately adjacent to the damage, generating a single-strand break with 5'-deoxyribose phosphate and 3'-hydroxyl ends. Also incises at AP sites in the DNA strand of DNA/RNA hybrids, single-stranded DNA regions of R-loop structures, and single-stranded RNA molecules. Operates at switch sites of immunoglobulin (Ig) constant regions where it mediates Ig isotype class switch recombination. Processes AP sites induced by successive action of AICDA and UNG. Generates staggered nicks in opposite DNA strands resulting in the formation of double-strand DNA breaks that are finally resolved via non-homologous end joining repair pathway. Has 3'-5' exodeoxyribonuclease activity on mismatched deoxyribonucleotides at the 3' termini of nicked or gapped DNA molecules during short-patch BER. Possesses DNA 3' phosphodiesterase activity capable of removing lesions (such as phosphoglycolate and 8-oxoguanine) blocking the 3' side of DNA strand breaks. Also acts as an endoribonuclease involved in the control of single-stranded RNA metabolism. Plays a role in regulating MYC mRNA turnover by preferentially cleaving in between UA and CA dinucleotides of the MYC coding region determinant (CRD). In association with NMD1, plays a role in the rRNA quality control process during cell cycle progression. Acts as a loading factor for POLB onto non-incised AP sites in DNA and stimulates the 5'-terminal deoxyribose 5'-phosphate (dRp) excision activity of POLB. Exerts reversible nuclear redox activity to regulate DNA binding affinity and transcriptional activity of transcriptional factors by controlling the redox status of their DNA-binding domain, such as the FOS/JUN AP-1 complex after exposure to IR. Involved in calcium-dependent down-regulation of parathyroid hormone (PTH) expression by binding to negative calcium response elements (nCaREs). Together with HNRNPL or the dimer XRCC5/XRCC6, associates with nCaRE, acting as an activator of transcriptional repression. May also play a role in the epigenetic regulation of gene expression by participating in DNA demethylation. Stimulates the YBX1-mediated MDR1 promoter activity, when acetylated at Lys-6 and Lys-7, leading to drug resistance. Plays a role in protection from granzyme-mediated cellular repair leading to cell death. Binds DNA and RNA. Associates, together with YBX1, on the MDR1 promoter. Together with NPM1, associates with rRNA. This Pan paniscus (Pygmy chimpanzee) protein is DNA repair nuclease/redox regulator APEX1 (APEX1).